The primary structure comprises 404 residues: S-adenosylmethionine synthase (404 aa).

H17 serves as a coordination point for ATP. Mg(2+) is bound at residue D19. K(+) is bound at residue E45. L-methionine-binding residues include E58 and Q101. The interval Q101–Q111 is flexible loop. ATP is bound by residues D177–K179, R244–F245, D253, R259–K260, A276, and K280. L-methionine is bound at residue D253. L-methionine is bound at residue K284.

The protein belongs to the AdoMet synthase family. In terms of assembly, homotetramer; dimer of dimers. Mg(2+) serves as cofactor. Requires K(+) as cofactor.

It is found in the cytoplasm. It carries out the reaction L-methionine + ATP + H2O = S-adenosyl-L-methionine + phosphate + diphosphate. It functions in the pathway amino-acid biosynthesis; S-adenosyl-L-methionine biosynthesis; S-adenosyl-L-methionine from L-methionine: step 1/1. Catalyzes the formation of S-adenosylmethionine (AdoMet) from methionine and ATP. The overall synthetic reaction is composed of two sequential steps, AdoMet formation and the subsequent tripolyphosphate hydrolysis which occurs prior to release of AdoMet from the enzyme. The chain is S-adenosylmethionine synthase from Geobacillus thermodenitrificans (strain NG80-2).